A 62-amino-acid polypeptide reads, in one-letter code: Temporin-HN1 (62 aa).

Residues 1-22 (MFTLKKSLLLLLFLGTINLSLS) form the signal peptide. Residues 23–44 (EQERNAEEERRDDPEEMDAEVE) constitute a propeptide that is removed on maturation. Leu60 carries the leucine amide modification.

Expressed by the skin glands.

It is found in the secreted. Functionally, has antimicrobial activity against some Gram-positive bacteria and fungi but has no activity against a range of Gram-negative bacteria except P.faecalis. Active against the Gram-positive bacteria S.aureus ATCC 25923 (MIC=37.5 uM), S.carnosus KHS (MIC=37.5 uM), B.licheniformis X39 (MIC=19 uM), R.rhodochrous X15 (MIC=4.8 uM), is virtually inactive against E.faecalis 981 (MIC=150 uM) and inactive against E.faecium 091299. Has some antimicrobial activity against the Gram-negative bacterium P.faecalis X29 (MIC=75 uM) and is inactive against E.coli, P.aeruginosa and S.typhi. Has antifungal activity against C.albicans ATCC 2002 (MIC=19 uM) and lower activity against the slime mold 090223 (MIC=75 uM). Has low hemolytic activity against human erythrocytes (LC(50)=75 uM). The polypeptide is Temporin-HN1 (Odorrana hainanensis (Odor frog)).